The following is a 637-amino-acid chain: Threonine--tRNA ligase (637 aa).

The region spanning 1 to 61 is the TGS domain; the sequence is MPNVKLPDGN…KEDCSLIIVT (61 aa). The segment at 242 to 533 is catalytic; it reads DHRKLGKALD…LIEHYAGKLP (292 aa). 3 residues coordinate Zn(2+): Cys-333, His-384, and His-510.

It belongs to the class-II aminoacyl-tRNA synthetase family. As to quaternary structure, homodimer. Zn(2+) serves as cofactor.

It localises to the cytoplasm. The catalysed reaction is tRNA(Thr) + L-threonine + ATP = L-threonyl-tRNA(Thr) + AMP + diphosphate + H(+). Its function is as follows. Catalyzes the attachment of threonine to tRNA(Thr) in a two-step reaction: L-threonine is first activated by ATP to form Thr-AMP and then transferred to the acceptor end of tRNA(Thr). Also edits incorrectly charged L-seryl-tRNA(Thr). This Legionella pneumophila (strain Corby) protein is Threonine--tRNA ligase.